The chain runs to 426 residues: Transcriptional enhancer factor TEF-1 (426 aa).

Met1 is subject to N-acetylmethionine. A compositionally biased stretch (polar residues) spans Met1–Pro12. The interval Met1 to Ala31 is disordered. At Ser11 the chain carries Phosphoserine. The span at Asn15–Asp28 shows a compositional bias: basic and acidic residues. The segment at residues Asp28–Asp104 is a DNA-binding region (TEA). The residue at position 108 (Lys108) is an N6-lactoyllysine. Positions Gly167–Asp426 are transcriptional activation.

In terms of assembly, interacts with YAP1 and WWTR1/TAZ. In terms of processing, lactylation by AARS1 promotes nuclear localization and stabilization of YAP1, leading to increased Hippo signaling pathway. Delactylated by SIRT1. As to expression, in developing skeletal muscle and myocardium, in mitotic neuroblasts both in the brain and spinal cord. At later stages of embryogenesis expressed in several developing structures such as the olfactory system, the intestine, and the kidney.

The protein resides in the nucleus. Its function is as follows. Transcription factor which plays a key role in the Hippo signaling pathway, a pathway involved in organ size control and tumor suppression by restricting proliferation and promoting apoptosis. The core of this pathway is composed of a kinase cascade wherein MST1/MST2, in complex with its regulatory protein SAV1, phosphorylates and activates LATS1/2 in complex with its regulatory protein MOB1, which in turn phosphorylates and inactivates YAP1 oncoprotein and WWTR1/TAZ. Acts by mediating gene expression of YAP1 and WWTR1/TAZ, thereby regulating cell proliferation, migration and epithelial mesenchymal transition (EMT) induction. Binds specifically and cooperatively to the SPH and GT-IIC 'enhansons' (5'-GTGGAATGT-3') and activates transcription in vivo in a cell-specific manner. The activation function appears to be mediated by a limiting cell-specific transcriptional intermediary factor (TIF). Involved in cardiac development. Binds to the M-CAT motif. This chain is Transcriptional enhancer factor TEF-1 (Tead1), found in Mus musculus (Mouse).